Reading from the N-terminus, the 439-residue chain is 3-phosphoshikimate 1-carboxyvinyltransferase (439 aa).

3 residues coordinate 3-phosphoshikimate: lysine 25, serine 26, and arginine 30. Lysine 25 contacts phosphoenolpyruvate. 2 residues coordinate phosphoenolpyruvate: glycine 96 and arginine 124. 3-phosphoshikimate-binding residues include serine 170, serine 171, glutamine 172, serine 202, aspartate 324, and lysine 351. Glutamine 172 provides a ligand contact to phosphoenolpyruvate. Aspartate 324 serves as the catalytic Proton acceptor. Phosphoenolpyruvate contacts are provided by arginine 355, arginine 399, and lysine 424.

It belongs to the EPSP synthase family. Monomer.

The protein localises to the cytoplasm. The catalysed reaction is 3-phosphoshikimate + phosphoenolpyruvate = 5-O-(1-carboxyvinyl)-3-phosphoshikimate + phosphate. Its pathway is metabolic intermediate biosynthesis; chorismate biosynthesis; chorismate from D-erythrose 4-phosphate and phosphoenolpyruvate: step 6/7. Functionally, catalyzes the transfer of the enolpyruvyl moiety of phosphoenolpyruvate (PEP) to the 5-hydroxyl of shikimate-3-phosphate (S3P) to produce enolpyruvyl shikimate-3-phosphate and inorganic phosphate. This chain is 3-phosphoshikimate 1-carboxyvinyltransferase, found in Bordetella avium (strain 197N).